The sequence spans 176 residues: MTDSPEETTVRVAVGRITRAHGVHGEVGVQVRTDDPDRRFAAGAVLTTDTGVTLTVQRTRWHSGRLLVRFAGIDDRTTAEDLRGRVLFAEVDERVRPEDPEEYYDYQLIGMRVETVTGQEIGVVREVLHLPGQDVLAIERSADGDAFVPFVAALVPEVDVDQRRLRIDPPPGLLEL.

The 74-residue stretch at P100–L173 folds into the PRC barrel domain.

It belongs to the RimM family. As to quaternary structure, binds ribosomal protein uS19.

It localises to the cytoplasm. Functionally, an accessory protein needed during the final step in the assembly of 30S ribosomal subunit, possibly for assembly of the head region. Essential for efficient processing of 16S rRNA. May be needed both before and after RbfA during the maturation of 16S rRNA. It has affinity for free ribosomal 30S subunits but not for 70S ribosomes. This is Ribosome maturation factor RimM from Acidothermus cellulolyticus (strain ATCC 43068 / DSM 8971 / 11B).